The primary structure comprises 237 residues: MOB kinase activator 2 (237 aa).

The interval 1 to 21 (MDWLMGKSKAKPNGKKPAAEE) is disordered. The Zn(2+) site is built by C78, C83, H157, and H162. Residues 217–229 (GGSGDGAGSGGPG) are compositionally biased toward gly residues. The tract at residues 217 to 237 (GGSGDGAGSGGPGAQNHVKER) is disordered.

This sequence belongs to the MOB1/phocein family. As to quaternary structure, binds STK38 and STK38L. In terms of processing, phosphorylated.

Its subcellular location is the nucleus. The protein localises to the cytoplasm. It localises to the perinuclear region. Its function is as follows. Stimulates the autophosphorylation and kinase activity of STK38 and STK38L. This Homo sapiens (Human) protein is MOB kinase activator 2 (MOB2).